The sequence spans 80 residues: Translation initiation factor IF-1, chloroplastic (80 aa).

One can recognise an S1-like domain in the interval 1 to 74 (MKEQKWIHEG…TRGRIIYRLR (74 aa)).

This sequence belongs to the IF-1 family. Component of the 30S ribosomal translation pre-initiation complex which assembles on the 30S ribosome in the order IF-2 and IF-3, IF-1 and N-formylmethionyl-tRNA(fMet); mRNA recruitment can occur at any time during PIC assembly.

It localises to the plastid. The protein resides in the chloroplast. Functionally, one of the essential components for the initiation of protein synthesis. Stabilizes the binding of IF-2 and IF-3 on the 30S subunit to which N-formylmethionyl-tRNA(fMet) subsequently binds. Helps modulate mRNA selection, yielding the 30S pre-initiation complex (PIC). Upon addition of the 50S ribosomal subunit IF-1, IF-2 and IF-3 are released leaving the mature 70S translation initiation complex. The protein is Translation initiation factor IF-1, chloroplastic of Illicium parviflorum (Yellow anise tree).